The primary structure comprises 305 residues: Small ribosomal subunit biogenesis GTPase RsgA (305 aa).

Residues 67–224 enclose the CP-type G domain; the sequence is SSELVRPAVA…VADTPGFSSF (158 aa). GTP is bound by residues 116–119 and 166–174; these read NKID and GQSGVGKST. Residues Cys248, Cys253, His255, and Cys261 each coordinate Zn(2+).

This sequence belongs to the TRAFAC class YlqF/YawG GTPase family. RsgA subfamily. In terms of assembly, monomer. Associates with 30S ribosomal subunit, binds 16S rRNA. It depends on Zn(2+) as a cofactor.

The protein resides in the cytoplasm. Its function is as follows. One of several proteins that assist in the late maturation steps of the functional core of the 30S ribosomal subunit. Helps release RbfA from mature subunits. May play a role in the assembly of ribosomal proteins into the subunit. Circularly permuted GTPase that catalyzes slow GTP hydrolysis, GTPase activity is stimulated by the 30S ribosomal subunit. The sequence is that of Small ribosomal subunit biogenesis GTPase RsgA from Ruminiclostridium cellulolyticum (strain ATCC 35319 / DSM 5812 / JCM 6584 / H10) (Clostridium cellulolyticum).